The primary structure comprises 1330 residues: Nephrocystin-3 (1330 aa).

Gly2 carries N-myristoyl glycine lipidation. Positions 83–207 (ELEYAAAEYE…QRLQAQGIQV (125 aa)) form a coiled coil. 11 TPR repeats span residues 471–504 (IPEE…AHEL), 885–918 (CLLN…KSAM), 920–942 (TEYF…MSCL), 943–976 (ADLY…RETA), 985–1018 (AQSL…SENA), 1027–1060 (AREL…HQKA), 1093–1126 (ARTL…RERV), 1135–1168 (AQSL…RRRA), 1177–1210 (AYTV…RQKS), 1219–1252 (ATAL…YEDS), and 1261–1294 (GETL…KEAE). The segment at 1296–1330 (SLLGGKAPSRHSSSGDTFSLKTAHSPNVFLQQGQR) is disordered. Residues 1305-1330 (RHSSSGDTFSLKTAHSPNVFLQQGQR) show a composition bias toward polar residues.

In terms of assembly, interacts with NPHP1 and INVS/NPHP2. Interacts (when myristoylated) with UNC119 and UNC119B; interaction is required for localization to cilium. Interacts with CEP164. Component of a complex containing at least ANKS6, INVS, NEK8 and NPHP3. ANKS6 may organize complex assembly by linking INVS and NPHP3 to NEK8 and INVS may target the complex to the proximal ciliary axoneme. Widely expressed at low level. Expressed in heart, placenta, liver, skeletal muscle, kidney and pancreas. Expressed at very low level in brain and lung.

Its subcellular location is the cell projection. The protein localises to the cilium. In terms of biological role, required for normal ciliary development and function. Inhibits disheveled-1-induced canonical Wnt-signaling activity and may also play a role in the control of non-canonical Wnt signaling which regulates planar cell polarity. Probably acts as a molecular switch between different Wnt signaling pathways. Required for proper convergent extension cell movements. In Homo sapiens (Human), this protein is Nephrocystin-3 (NPHP3).